The sequence spans 483 residues: Triplex capsid protein 1 (483 aa).

Residues 24 to 40 carry the RIP homotypic interaction motif (RHIM) motif; that stretch reads LLGNNRFIQIGNGLHMT.

This sequence belongs to the herpesviridae TRX1 protein family. Interacts with TRX2, MCP and capsid vertex component 2/CVC2. Self-assembles into homo-oligomeric amyloid fibrils. Interacts with host ZBP1; this interaction prevents host necroptosis and extrinsic apoptosis. Interacts with host RIPK3.

The protein resides in the virion. Its subcellular location is the host nucleus. Functionally, structural component of the T=16 icosahedral capsid. The capsid is composed of pentamers and hexamers of major capsid protein/MCP, which are linked together by heterotrimers called triplexes. These triplexes are formed by a single molecule of triplex protein 1/TRX1 and two copies of triplex protein 2/TRX2. Additionally, TRX1 is required for efficient transport of TRX2 to the nucleus, which is the site of capsid assembly. Also prevents necroptosis and extrinsic apoptosis by sequestering host ZBP1 into large, insoluble supercomplexes and impairing its ability to interact with RIPK3. This chain is Triplex capsid protein 1, found in Varicella-zoster virus (strain Dumas) (HHV-3).